A 227-amino-acid chain; its full sequence is PKHD-type hydroxylase GOX0559 (227 aa).

The region spanning 78–178 (RVYPPLFNRY…RWASFFWSQS (101 aa)) is the Fe2OG dioxygenase domain. Fe cation-binding residues include His-96, Asp-98, and His-159. 2-oxoglutarate is bound at residue Arg-169.

Requires Fe(2+) as cofactor. The cofactor is L-ascorbate.

In Gluconobacter oxydans (strain 621H) (Gluconobacter suboxydans), this protein is PKHD-type hydroxylase GOX0559.